Reading from the N-terminus, the 609-residue chain is Arginine--tRNA ligase (609 aa).

Positions 132–142 match the 'HIGH' region motif; the sequence is ANPTSSLHVGH.

This sequence belongs to the class-I aminoacyl-tRNA synthetase family. In terms of assembly, monomer.

It localises to the cytoplasm. It catalyses the reaction tRNA(Arg) + L-arginine + ATP = L-arginyl-tRNA(Arg) + AMP + diphosphate. This is Arginine--tRNA ligase from Psychrobacter cryohalolentis (strain ATCC BAA-1226 / DSM 17306 / VKM B-2378 / K5).